Here is a 60-residue protein sequence, read N- to C-terminus: MADESKFDQFKGNVKETVGNVTDNKELEKEGQQDKATGKAKEVVENAKNKITDAIDKLKK.

The disordered stretch occupies residues 18–41; it reads VGNVTDNKELEKEGQQDKATGKAK. Over residues 23 to 41 the composition is skewed to basic and acidic residues; sequence DNKELEKEGQQDKATGKAK.

This sequence belongs to the UPF0337 (CsbD) family.

The polypeptide is UPF0337 protein SAV1625 (Staphylococcus aureus (strain Mu50 / ATCC 700699)).